We begin with the raw amino-acid sequence, 416 residues long: NADH-quinone oxidoreductase subunit D (416 aa).

Belongs to the complex I 49 kDa subunit family. As to quaternary structure, NDH-1 is composed of 14 different subunits. Subunits NuoB, C, D, E, F, and G constitute the peripheral sector of the complex.

The protein resides in the cell inner membrane. It catalyses the reaction a quinone + NADH + 5 H(+)(in) = a quinol + NAD(+) + 4 H(+)(out). Its function is as follows. NDH-1 shuttles electrons from NADH, via FMN and iron-sulfur (Fe-S) centers, to quinones in the respiratory chain. The immediate electron acceptor for the enzyme in this species is believed to be ubiquinone. Couples the redox reaction to proton translocation (for every two electrons transferred, four hydrogen ions are translocated across the cytoplasmic membrane), and thus conserves the redox energy in a proton gradient. The polypeptide is NADH-quinone oxidoreductase subunit D (Rhodopseudomonas palustris (strain BisB5)).